The sequence spans 375 residues: Biotin synthase, mitochondrial (375 aa).

Residues M1–L16 constitute a mitochondrion transit peptide. Positions H81–K310 constitute a Radical SAM core domain. The [4Fe-4S] cluster site is built by C99, C103, and C106. C143, C176, C236, and R314 together coordinate [2Fe-2S] cluster.

The protein belongs to the radical SAM superfamily. Biotin synthase family. It depends on [4Fe-4S] cluster as a cofactor. [2Fe-2S] cluster is required as a cofactor.

Its subcellular location is the mitochondrion. It catalyses the reaction (4R,5S)-dethiobiotin + (sulfur carrier)-SH + 2 reduced [2Fe-2S]-[ferredoxin] + 2 S-adenosyl-L-methionine = (sulfur carrier)-H + biotin + 2 5'-deoxyadenosine + 2 L-methionine + 2 oxidized [2Fe-2S]-[ferredoxin]. Its pathway is cofactor biosynthesis; biotin biosynthesis; biotin from 7,8-diaminononanoate: step 2/2. In Saccharomyces cerevisiae (strain ATCC 204508 / S288c) (Baker's yeast), this protein is Biotin synthase, mitochondrial (BIO2).